The following is a 648-amino-acid chain: Threonine--tRNA ligase (648 aa).

The TGS domain maps to 1–63 (MAQISLTFPD…HADATIAIHT (63 aa)). Positions 247-544 (DHRKLGREMD…LIENSAGKLP (298 aa)) are catalytic. Residues Cys-344, His-395, and His-521 each contribute to the Zn(2+) site.

This sequence belongs to the class-II aminoacyl-tRNA synthetase family. In terms of assembly, homodimer. Zn(2+) is required as a cofactor.

It is found in the cytoplasm. It carries out the reaction tRNA(Thr) + L-threonine + ATP = L-threonyl-tRNA(Thr) + AMP + diphosphate + H(+). In terms of biological role, catalyzes the attachment of threonine to tRNA(Thr) in a two-step reaction: L-threonine is first activated by ATP to form Thr-AMP and then transferred to the acceptor end of tRNA(Thr). Also edits incorrectly charged L-seryl-tRNA(Thr). This Roseobacter denitrificans (strain ATCC 33942 / OCh 114) (Erythrobacter sp. (strain OCh 114)) protein is Threonine--tRNA ligase.